The primary structure comprises 366 residues: Protein sigma-NS (366 aa).

An important for ssRNA-binding and formation of complexes region spans residues 1–11; it reads MASSLRAAISK.

Belongs to the orthoreovirus sigma-NS protein family. Homooligomer; in presence of RNA. Interacts with protein mu-NS; this interaction allows the localization of sigma-NS to the viral factories. Interacts with host G3BP1 (via C-terminus); this interaction induces the relocalization of G3BP1 and other SG proteins to the viral factories periphery.

It is found in the host cytoplasm. Its function is as follows. Protein that binds to ssRNA and participates with protein mu-NS in forming the matrix of viral factories, which are large inclusions in the host cytoplasm where replication intermediates are assembled and viral RNA replication takes place. Plays a role in the inhibition of the integrated stress response (ISR) to escape from host cell translational shutoff. Participates in the disruption of stress granules (SG) through its association with host G3BP1 and mu-NS. This Mammalia (T3D) protein is Protein sigma-NS (S3).